A 361-amino-acid polypeptide reads, in one-letter code: Adenosine kinase (361 aa).

The Nuclear localization signal signature appears at 7–15 (PKPKKLKVE). Position 34 (D34) interacts with adenosine. S48 contributes to the Mg(2+) binding site. Y76 is modified (phosphotyrosine). N147 provides a ligand contact to Mg(2+). Q305 contributes to the adenosine binding site. D316 is an active-site residue. D316 functions as the Proton acceptor in the catalytic mechanism.

This sequence belongs to the carbohydrate kinase PfkB family. Monomer. Mg(2+) is required as a cofactor. Widely expressed. Highly expressed in liver, testis, kidney and spleen (at protein level). In brain, expression in most forebrain structures and the cerebellum is higher than in the midbrain and brainstem (at protein level). As to expression, major isoform in testis and kidney. Not detected in most brain regions, except in the cerebellum, where it is expressed at a similar level to that of isoform 2 (at protein level). In terms of tissue distribution, major isoform in spleen and in most brain regions, except in the cerebellum, where it is expressed at a similar level to that of isoform 1 (at protein level).

It is found in the nucleus. It localises to the cytoplasm. It catalyses the reaction adenosine + ATP = AMP + ADP + H(+). Its pathway is purine metabolism; AMP biosynthesis via salvage pathway; AMP from adenosine: step 1/1. Its activity is regulated as follows. Activity is inhibited by 5-iodotubercidin and 5'-amino-5'-deoxyadenosine. Its function is as follows. Catalyzes the phosphorylation of the purine nucleoside adenosine at the 5' position in an ATP-dependent manner. Serves as a potential regulator of concentrations of extracellular adenosine and intracellular adenine nucleotides. The protein is Adenosine kinase (Adk) of Mus musculus (Mouse).